The following is a 212-amino-acid chain: Thiamine-phosphate synthase (212 aa).

4-amino-2-methyl-5-(diphosphooxymethyl)pyrimidine-binding positions include 39–43 and asparagine 71; that span reads QLREK. Mg(2+)-binding residues include aspartate 72 and aspartate 91. Serine 110 is a binding site for 4-amino-2-methyl-5-(diphosphooxymethyl)pyrimidine. 137 to 139 contacts 2-[(2R,5Z)-2-carboxy-4-methylthiazol-5(2H)-ylidene]ethyl phosphate; sequence TPT. 4-amino-2-methyl-5-(diphosphooxymethyl)pyrimidine is bound at residue lysine 140. Glycine 168 lines the 2-[(2R,5Z)-2-carboxy-4-methylthiazol-5(2H)-ylidene]ethyl phosphate pocket.

It belongs to the thiamine-phosphate synthase family. Mg(2+) serves as cofactor.

The enzyme catalyses 2-[(2R,5Z)-2-carboxy-4-methylthiazol-5(2H)-ylidene]ethyl phosphate + 4-amino-2-methyl-5-(diphosphooxymethyl)pyrimidine + 2 H(+) = thiamine phosphate + CO2 + diphosphate. The catalysed reaction is 2-(2-carboxy-4-methylthiazol-5-yl)ethyl phosphate + 4-amino-2-methyl-5-(diphosphooxymethyl)pyrimidine + 2 H(+) = thiamine phosphate + CO2 + diphosphate. It carries out the reaction 4-methyl-5-(2-phosphooxyethyl)-thiazole + 4-amino-2-methyl-5-(diphosphooxymethyl)pyrimidine + H(+) = thiamine phosphate + diphosphate. It participates in cofactor biosynthesis; thiamine diphosphate biosynthesis; thiamine phosphate from 4-amino-2-methyl-5-diphosphomethylpyrimidine and 4-methyl-5-(2-phosphoethyl)-thiazole: step 1/1. Its function is as follows. Condenses 4-methyl-5-(beta-hydroxyethyl)thiazole monophosphate (THZ-P) and 2-methyl-4-amino-5-hydroxymethyl pyrimidine pyrophosphate (HMP-PP) to form thiamine monophosphate (TMP). In Acidothermus cellulolyticus (strain ATCC 43068 / DSM 8971 / 11B), this protein is Thiamine-phosphate synthase.